Reading from the N-terminus, the 119-residue chain is Small ribosomal subunit protein bS6 (119 aa).

The segment at 99–119 is disordered; sequence KKEKKQSRKEEGSENSEKVEE.

The protein belongs to the bacterial ribosomal protein bS6 family.

Its function is as follows. Binds together with bS18 to 16S ribosomal RNA. The chain is Small ribosomal subunit protein bS6 from Thermosipho melanesiensis (strain DSM 12029 / CIP 104789 / BI429).